The following is a 197-amino-acid chain: uncharacterized protein (197 aa).

In terms of domain architecture, SIS spans 33–184 (MISKIMDASS…IAEFMSILGK (152 aa)).

Belongs to the SIS family. PHI subfamily.

This is an uncharacterized protein from Methanothermobacter thermautotrophicus (strain ATCC 29096 / DSM 1053 / JCM 10044 / NBRC 100330 / Delta H) (Methanobacterium thermoautotrophicum).